Consider the following 160-residue polypeptide: Transcriptional repressor NrdR (160 aa).

Residues 3 to 34 (CPYCQYEDTQVKDSRPVEEGAVIRRRRVCPVC) fold into a zinc finger. An ATP-cone domain is found at 49-139 (LLVSKKSGRC…VYRDFRNASD (91 aa)).

It belongs to the NrdR family. The cofactor is Zn(2+).

In terms of biological role, negatively regulates transcription of bacterial ribonucleotide reductase nrd genes and operons by binding to NrdR-boxes. This is Transcriptional repressor NrdR from Bartonella quintana (strain Toulouse) (Rochalimaea quintana).